The chain runs to 422 residues: MVNLIESDSIWKRNFNYLFFSRIVKISGDMFAFNSILWFLIYDGKGAIGTALLIAVTFLPEAVLAPVTGPFMKQTTLKFWMYFSDLTRAAIVLIIPLCHFAGFSPLWFVMTLMIVHSATGAAYNPASIALIPQIVNEQGIQKANAVLQSSAQIVRLGAVTLCGAFLTFISPSYTMLIALVLYLVSGFLVLFIKYTAVESQSESAVVTQRGTYIGRLKRGFRLVRKHQILYPLAIYCIFMNFAAAPWEALSAVYVAEDLNGQPIVYSLLKATTAAGAFLLGFVLAKVKVNRYGLLFVTAGIIEGFAFFITGMNTFLPLVFFAAFTFGAAVSAVNVPEYTIIQTSVDSEDQPQVYAVIHMISNISIPAGAVICGYAANAFGSGKVIAVGGIVEIIAGIGILLFTKLAKAERSDLIKEREASVHL.

The next 12 membrane-spanning stretches (helical) occupy residues 23-43 (IVKISGDMFAFNSILWFLIYD), 47-67 (AIGTALLIAVTFLPEAVLAPV), 90-110 (AIVLIIPLCHFAGFSPLWFVM), 112-132 (LMIVHSATGAAYNPASIALIP), 151-171 (AQIVRLGAVTLCGAFLTFISP), 172-192 (SYTMLIALVLYLVSGFLVLFI), 228-248 (ILYPLAIYCIFMNFAAAPWEA), 263-283 (IVYSLLKATTAAGAFLLGFVL), 291-308 (YGLLFVTAGIIEGFAFFI), 318-340 (VFFAAFTFGAAVSAVNVPEYTII), 352-372 (VYAVIHMISNISIPAGAVICG), and 381-401 (GKVIAVGGIVEIIAGIGILLF).

Belongs to the major facilitator superfamily.

The protein localises to the cell membrane. This is an uncharacterized protein from Bacillus subtilis (strain 168).